We begin with the raw amino-acid sequence, 203 residues long: Glycerol-3-phosphate acyltransferase (203 aa).

Transmembrane regions (helical) follow at residues 4 to 24 (MAVT…AVLI), 80 to 100 (PVLL…PLFF), 117 to 137 (PIGL…AILF), and 139 to 159 (YSSL…WMIK).

It belongs to the PlsY family. Probably interacts with PlsX.

Its subcellular location is the cell inner membrane. It catalyses the reaction an acyl phosphate + sn-glycerol 3-phosphate = a 1-acyl-sn-glycero-3-phosphate + phosphate. It participates in lipid metabolism; phospholipid metabolism. Catalyzes the transfer of an acyl group from acyl-phosphate (acyl-PO(4)) to glycerol-3-phosphate (G3P) to form lysophosphatidic acid (LPA). This enzyme utilizes acyl-phosphate as fatty acyl donor, but not acyl-CoA or acyl-ACP. The polypeptide is Glycerol-3-phosphate acyltransferase (Vibrio vulnificus (strain YJ016)).